The following is a 555-amino-acid chain: GPI-anchor transamidase component PIGS (555 aa).

The Cytoplasmic segment spans residues 2-18 (AATGAAATDLEVVRGKR). Residues arginine 15 and arginine 18 each contribute to the a cardiolipin site. A helical membrane pass occupies residues 19–39 (AALFFATVVIVLGLPLWWKTT). Topologically, residues 40 to 517 (ETYRAPLPYS…LHLLYFPDDQ (478 aa)) are lumenal. N-linked (GlcNAc...) asparagine glycosylation is found at asparagine 267 and asparagine 370. Residues 518–532 (KFAIYIPLFLPMAVP) traverse the membrane as a helical segment. At 533 to 555 (ILLSLFKIFLETRKSWKKPEKTD) the chain is on the cytoplasmic side.

The protein belongs to the PIGS family. In terms of assembly, heteropentamer. Part of the GPI-anchor transamidase complex, consisting of PIGK, PIGT, PIGS, PIGU and GAA1.

The protein resides in the endoplasmic reticulum membrane. It participates in glycolipid biosynthesis; glycosylphosphatidylinositol-anchor biosynthesis. Its function is as follows. Component of the glycosylphosphatidylinositol-anchor (GPI-anchor) transamidase (GPI-T) complex that catalyzes the formation of the linkage between a proprotein and a GPI-anchor and participates in GPI anchored protein biosynthesis. The polypeptide is GPI-anchor transamidase component PIGS (Bos taurus (Bovine)).